The primary structure comprises 571 residues: Leucine aminopeptidase A1, chloroplastic (571 aa).

Residues 1–53 constitute a chloroplast transit peptide; sequence MATLRVSSLFASSSSSLHSNPSVFTKYQSSPKWAFSFPVTPLCSKRSKRIVHC. Mg(2+) is bound by residues K342 and D347. The active site involves K354. 3 residues coordinate Mg(2+): D367, D427, and E429. R431 is an active-site residue.

This sequence belongs to the peptidase M17 family. In terms of assembly, homohexamer (dimer of homotrimers). Mg(2+) is required as a cofactor. Observed during floral development. Expressed in healthy and senescent leaves, cotyledons (emergence from seed coats), pistils, sepals, petals, stamens, and floral buds (at protein level). Present at very low levels in healthy leaves.

It localises to the plastid. Its subcellular location is the chloroplast. It carries out the reaction Release of an N-terminal amino acid, Xaa-|-Yaa-, in which Xaa is preferably Leu, but may be other amino acids including Pro although not Arg or Lys, and Yaa may be Pro. Amino acid amides and methyl esters are also readily hydrolyzed, but rates on arylamides are exceedingly low.. The enzyme catalyses Release of N-terminal proline from a peptide.. Catalyzes the removal of unsubstituted N-terminal amino acids from various peptides. When associated as homohexamer, catalyzes the proteolyzes of Xaa-Leu dipeptides. Possesses leucine aminopeptidase activity against the model substrate leucine-amido methyl coumarin. Presumably involved in the processing and regular turnover of intracellular proteins. Regulates wound signaling and has a role in insect defense. Functionally, functions as a molecular chaperone to protect proteins from heat-induced damage. The chain is Leucine aminopeptidase A1, chloroplastic from Solanum lycopersicum (Tomato).